A 342-amino-acid chain; its full sequence is Platelet-activating factor receptor (342 aa).

The Extracellular portion of the chain corresponds to Met-1–Thr-16. An N-linked (GlcNAc...) asparagine glycan is attached at Asn-4. The chain crosses the membrane as a helical span at residues Leu-17 to Trp-38. Topologically, residues Val-39 to Ile-54 are cytoplasmic. A helical transmembrane segment spans residues Phe-55 to Ile-74. Topologically, residues Val-75–Asn-91 are extracellular. A disulfide bond links Cys-90 and Cys-173. Residues Leu-92–Tyr-113 form a helical membrane-spanning segment. Topologically, residues Asn-114–Arg-133 are cytoplasmic. Residues Gly-134–Met-155 traverse the membrane as a helical segment. Residues Asp-156–Val-184 lie on the Extracellular side of the membrane. A glycan (N-linked (GlcNAc...) asparagine) is linked at Asn-169. A helical transmembrane segment spans residues Leu-185–Cys-205. At Asn-206–Met-233 the chain is on the cytoplasmic side. A helical transmembrane segment spans residues Val-234–Pro-254. The Extracellular portion of the chain corresponds to Trp-255–Gln-276. A helical transmembrane segment spans residues Val-277–Leu-296. Residues Thr-297–Asn-342 lie on the Cytoplasmic side of the membrane.

This sequence belongs to the G-protein coupled receptor 1 family. In terms of assembly, interacts with ARRB1.

The protein localises to the cell membrane. Functionally, receptor for platelet activating factor, a chemotactic phospholipid mediator that possesses potent inflammatory, smooth-muscle contractile and hypotensive activity. Seems to mediate its action via a G protein that activates a phosphatidylinositol-calcium second messenger system. This Cavia porcellus (Guinea pig) protein is Platelet-activating factor receptor (PTAFR).